The following is a 115-amino-acid chain: Holo-[acyl-carrier-protein] synthase (115 aa).

Residues D8 and E50 each contribute to the Mg(2+) site.

The protein belongs to the P-Pant transferase superfamily. AcpS family. Mg(2+) is required as a cofactor.

The protein localises to the cytoplasm. The enzyme catalyses apo-[ACP] + CoA = holo-[ACP] + adenosine 3',5'-bisphosphate + H(+). Functionally, transfers the 4'-phosphopantetheine moiety from coenzyme A to a Ser of acyl-carrier-protein. In Renibacterium salmoninarum (strain ATCC 33209 / DSM 20767 / JCM 11484 / NBRC 15589 / NCIMB 2235), this protein is Holo-[acyl-carrier-protein] synthase.